The following is a 943-amino-acid chain: Conidiophore development regulator abaA (943 aa).

2 disordered regions span residues M1 to G69 and T111 to G133. Residues I29–L43 are compositionally biased toward basic and acidic residues. Over residues P59–G68 the composition is skewed to polar residues. Residues Q161–L254 constitute a DNA-binding region (TEA). Residues E537–R555 show a composition bias toward basic and acidic residues. Disordered stretches follow at residues E537–T575 and G809–G901. The segment covering D865–T889 has biased composition (low complexity).

This sequence belongs to the TEC1 family.

Its subcellular location is the nucleus. In terms of biological role, brlA, abaA and wetA are pivotal regulators of conidiophore development and conidium maturation. They act individually and together to regulate their own expression and that of numerous other sporulation-specific genes. Binds to the sequence 5'-CATTCY-3', where Y is a pyrimidine, making both major- and minor-groove contacts. The chain is Conidiophore development regulator abaA from Hapsidospora chrysogena (Acremonium chrysogenum).